Consider the following 115-residue polypeptide: MKLTKEKKNDCLVGVSYIPPLNFFTLTFLFLLRIEKVHLSLSLSLSLSLRFYYFHNVCYPSLFLFFCFVIPFFYSVRFILLYLHILRSFYELNILLLYGAENSRRQSPPGYYVIR.

Residues 1–11 are Cytoplasmic-facing; it reads MKLTKEKKNDC. The helical transmembrane segment at 12–32 threads the bilayer; sequence LVGVSYIPPLNFFTLTFLFLL. The Extracellular portion of the chain corresponds to 33 to 52; sequence RIEKVHLSLSLSLSLSLRFY. A helical membrane pass occupies residues 53 to 73; sequence YFHNVCYPSLFLFFCFVIPFF. Residues 74-78 are Cytoplasmic-facing; sequence YSVRF. A helical transmembrane segment spans residues 79 to 98; the sequence is ILLYLHILRSFYELNILLLY. Over 99 to 115 the chain is Extracellular; it reads GAENSRRQSPPGYYVIR.

The protein localises to the membrane. This is an uncharacterized protein from Saccharomyces cerevisiae (strain ATCC 204508 / S288c) (Baker's yeast).